Consider the following 386-residue polypeptide: ADP,ATP carrier protein 1, mitochondrial (386 aa).

The transit peptide at methionine 1 to glutamine 76 directs the protein to the mitochondrion. 3 Solcar repeats span residues serine 84 to leucine 177, lysine 189 to valine 281, and aspartate 289 to isoleucine 375. A run of 5 helical transmembrane segments spans residues phenylalanine 86–leucine 113, threonine 154–phenylalanine 178, tyrosine 187–leucine 207, phenylalanine 257–leucine 278, and phenylalanine 292–isoleucine 312. Positions 159 and 171 each coordinate ADP. Arginine 316 serves as a coordination point for ADP. The interval arginine 316–methionine 321 is important for transport activity. Positions arginine 316–methionine 321 match the Nucleotide carrier signature motif motif. Residues alanine 352–leucine 372 traverse the membrane as a helical segment.

It belongs to the mitochondrial carrier (TC 2.A.29) family. In terms of assembly, monomer.

It localises to the mitochondrion inner membrane. The enzyme catalyses ADP(in) + ATP(out) = ADP(out) + ATP(in). The matrix-open state (m-state) is inhibited by the membrane-permeable bongkrekic acid (BKA). The cytoplasmic-open state (c-state) is inhibited by the membrane-impermeable toxic inhibitor carboxyatractyloside (CATR). In terms of biological role, ADP:ATP antiporter that mediates import of ADP into the mitochondrial matrix for ATP synthesis, and export of ATP out to fuel the cell. Cycles between the cytoplasmic-open state (c-state) and the matrix-open state (m-state): operates by the alternating access mechanism with a single substrate-binding site intermittently exposed to either the cytosolic (c-state) or matrix (m-state) side of the inner mitochondrial membrane. In Gossypium hirsutum (Upland cotton), this protein is ADP,ATP carrier protein 1, mitochondrial (ANT1).